The following is a 552-amino-acid chain: NADH-ubiquinone oxidoreductase chain 5 (552 aa).

A run of 15 helical transmembrane segments spans residues 11–31 (PVTIHLGTWISLGDIVIPFGL), 36–56 (LAMTVIVPVGIITLCVLAYAI), 68–88 (FYIILSIFAVFMTILVVSDNY), 89–109 (LMMFIGWEFVGVISYLLISFW), 121–141 (SAILLNRMGDTFFVIALGLMI), 152–172 (IALVTPYMNTFLLNTLGLLLL), 196–216 (TPVSALLHAATMVCAGVYVLV), 229–249 (LLIICWLGGLTTLVSGLIAIV), 256–274 (VIALSTMSQLSIMVLAIGI), 287–307 (HAFFKALLFMGAGSVIHSFVA), 322–342 (LPFSYTAILIASLSLMAIPGL), 365–386 (ILYYIAVGSATLTSIYSLRVLY), 406–426 (SLGMMIPMIVLVIYSIFIGYS), 453–473 (AYIKLLPLILGLTLSAILVYV), and 532–552 (SRAVTYINVIVIINILYLFFI).

The protein belongs to the complex I subunit 5 family.

The protein resides in the mitochondrion inner membrane. It catalyses the reaction a ubiquinone + NADH + 5 H(+)(in) = a ubiquinol + NAD(+) + 4 H(+)(out). In terms of biological role, core subunit of the mitochondrial membrane respiratory chain NADH dehydrogenase (Complex I) that is believed to belong to the minimal assembly required for catalysis. Complex I functions in the transfer of electrons from NADH to the respiratory chain. The immediate electron acceptor for the enzyme is believed to be ubiquinone. This chain is NADH-ubiquinone oxidoreductase chain 5 (NAD5), found in Candida albicans (strain SC5314 / ATCC MYA-2876) (Yeast).